A 422-amino-acid chain; its full sequence is p-hydroxyphenylacetate 3-hydroxylase, oxygenase component (422 aa).

Trp112 serves as a coordination point for FMN. 2 residues coordinate substrate: His120 and Ser146. FMN-binding positions include 146–148 (SSI) and 169–171 (WSS). 263-266 (RPYF) provides a ligand contact to substrate. FMN-binding positions include Arg292, Tyr296, 374–375 (AT), and 396–397 (HA). Tyr296 provides a ligand contact to substrate.

It belongs to the HpaH/HsaA monooxygenase family. As to quaternary structure, homotetramer. The p-hydroxyphenylacetate 3-hydroxylase (HpaH) is composed of an oxygenase component C2 and a reductase component C1.

It catalyses the reaction 4-hydroxyphenylacetate + FMNH2 + O2 = 3,4-dihydroxyphenylacetate + FMN + H2O + H(+). The enzyme catalyses 4-hydroxyphenylacetate + FADH2 + O2 = 3,4-dihydroxyphenylacetate + FAD + H2O + H(+). Its pathway is aromatic compound metabolism; 4-hydroxyphenylacetate degradation; pyruvate and succinate semialdehyde from 4-hydroxyphenylacetate: step 1/7. Its activity is regulated as follows. Inhibited by flavin concentrations greater than 15 uM. Also inhibited by excess p-hydroxyphenylacetate (HPA). In terms of biological role, oxygenase component of a two-component system that utilizes reduced FMN (FMNH2) supplied by the reductase component to catalyze the hydroxylation of 4-hydroxyphenylacetic acid, leading to the production of 3,4-dihydroxyphenylacetate (3,4-DHPA). Also utilizes other reduced flavins such as FADH2 and reduced riboflavin to a lesser extent. Only the compounds with a hydroxyl group in the para (p-) position can be hydroxylated. May also oxidize phenol to catechol, and hydroxylate other phenol derivatives. This is p-hydroxyphenylacetate 3-hydroxylase, oxygenase component from Acinetobacter baumannii.